Consider the following 561-residue polypeptide: Dihydroxy-acid dehydratase (561 aa).

Residue Cys50 coordinates [2Fe-2S] cluster. Mg(2+) is bound at residue Asp82. [2Fe-2S] cluster is bound at residue Cys123. 2 residues coordinate Mg(2+): Asp124 and Lys125. Lys125 bears the N6-carboxylysine mark. Residue Cys195 coordinates [2Fe-2S] cluster. Glu447 serves as a coordination point for Mg(2+). Ser473 serves as the catalytic Proton acceptor.

This sequence belongs to the IlvD/Edd family. As to quaternary structure, homodimer. The cofactor is [2Fe-2S] cluster. It depends on Mg(2+) as a cofactor.

The enzyme catalyses (2R)-2,3-dihydroxy-3-methylbutanoate = 3-methyl-2-oxobutanoate + H2O. It catalyses the reaction (2R,3R)-2,3-dihydroxy-3-methylpentanoate = (S)-3-methyl-2-oxopentanoate + H2O. Its pathway is amino-acid biosynthesis; L-isoleucine biosynthesis; L-isoleucine from 2-oxobutanoate: step 3/4. The protein operates within amino-acid biosynthesis; L-valine biosynthesis; L-valine from pyruvate: step 3/4. Functionally, functions in the biosynthesis of branched-chain amino acids. Catalyzes the dehydration of (2R,3R)-2,3-dihydroxy-3-methylpentanoate (2,3-dihydroxy-3-methylvalerate) into 2-oxo-3-methylpentanoate (2-oxo-3-methylvalerate) and of (2R)-2,3-dihydroxy-3-methylbutanoate (2,3-dihydroxyisovalerate) into 2-oxo-3-methylbutanoate (2-oxoisovalerate), the penultimate precursor to L-isoleucine and L-valine, respectively. This chain is Dihydroxy-acid dehydratase, found in Synechocystis sp. (strain ATCC 27184 / PCC 6803 / Kazusa).